A 196-amino-acid chain; its full sequence is Secreted phosphoprotein 24 (196 aa).

Residues 1-19 (MKWCGVLMVALLQSLCCSG) form the signal peptide. Intrachain disulfides connect Cys83–Cys94 and Cys107–Cys125. Residues 125-196 (CGQDSSSSES…RGDSFGNHLE (72 aa)) are disordered. Positions 129-138 (SSSSESSSEE) are enriched in low complexity.

Belongs to the SPP2 family. In terms of processing, multiply phosphorylated at serine residues.

It is found in the secreted. Could coordinate an aspect of bone turnover. This Salmo salar (Atlantic salmon) protein is Secreted phosphoprotein 24 (spp2).